We begin with the raw amino-acid sequence, 155 residues long: Ribosomal RNA large subunit methyltransferase H (155 aa).

S-adenosyl-L-methionine is bound by residues Gly104 and 123–128 (LGPMTF).

Belongs to the RNA methyltransferase RlmH family. Homodimer.

The protein resides in the cytoplasm. The catalysed reaction is pseudouridine(1915) in 23S rRNA + S-adenosyl-L-methionine = N(3)-methylpseudouridine(1915) in 23S rRNA + S-adenosyl-L-homocysteine + H(+). In terms of biological role, specifically methylates the pseudouridine at position 1915 (m3Psi1915) in 23S rRNA. The sequence is that of Ribosomal RNA large subunit methyltransferase H from Nitratidesulfovibrio vulgaris (strain DSM 19637 / Miyazaki F) (Desulfovibrio vulgaris).